The following is a 153-amino-acid chain: Ribosomal RNA large subunit methyltransferase H (153 aa).

Residues leucine 70, glycine 102, and 121 to 126 (LSRMTF) contribute to the S-adenosyl-L-methionine site.

It belongs to the RNA methyltransferase RlmH family. In terms of assembly, homodimer.

The protein resides in the cytoplasm. The catalysed reaction is pseudouridine(1915) in 23S rRNA + S-adenosyl-L-methionine = N(3)-methylpseudouridine(1915) in 23S rRNA + S-adenosyl-L-homocysteine + H(+). In terms of biological role, specifically methylates the pseudouridine at position 1915 (m3Psi1915) in 23S rRNA. The sequence is that of Ribosomal RNA large subunit methyltransferase H from Geotalea daltonii (strain DSM 22248 / JCM 15807 / FRC-32) (Geobacter daltonii).